The primary structure comprises 112 residues: Integration host factor subunit alpha (112 aa).

Belongs to the bacterial histone-like protein family. In terms of assembly, heterodimer of an alpha and a beta chain.

In terms of biological role, this protein is one of the two subunits of integration host factor, a specific DNA-binding protein that functions in genetic recombination as well as in transcriptional and translational control. This Rhizobium rhizogenes (strain K84 / ATCC BAA-868) (Agrobacterium radiobacter) protein is Integration host factor subunit alpha.